The primary structure comprises 95 residues: Small ribosomal subunit protein uS19 (95 aa).

It belongs to the universal ribosomal protein uS19 family.

Protein S19 forms a complex with S13 that binds strongly to the 16S ribosomal RNA. This is Small ribosomal subunit protein uS19 from Thermodesulfovibrio yellowstonii (strain ATCC 51303 / DSM 11347 / YP87).